The sequence spans 231 residues: MAFKFVVFAAALAYANAGLLGAPAVATYAAGPAVAYSARPAVSTAYINQAAPFLAHAAPLAVAHAAPYAVHAPAVGASHQSVVRSLGGNQAVSHYSKAVDSAFSSVRKFDTRITNDALLRAHAPVAVAHAAPVVVHLTAAHAPVVSSYAHAPLVSSYAAHAPLVSSYAAHAPLVSSYAAHAPVLSTAYAAHAPVVSSYAAPVVARTAAVGYSPAAVVSHTSFTGLGASYAW.

The N-terminal stretch at 1–17 is a signal peptide; it reads MAFKFVVFAAALAYANA. A run of 2 repeats spans residues 130-133 and 199-202.

Component of the cuticle of Tenebrio molitor. In Tenebrio molitor (Yellow mealworm beetle), this protein is Cuticle protein LPCP-23 (LPCP-23).